Reading from the N-terminus, the 94-residue chain is Progonadoliberin-3 (94 aa).

Positions 1–23 (MEGKGRVLVQLLMLACVLEVSLC) are cleaved as a signal peptide. Gln24 is subject to Pyrrolidone carboxylic acid. Gly33 is subject to Glycine amide.

It belongs to the GnRH family.

The protein resides in the secreted. Its function is as follows. Stimulates the secretion of gonadotropins. This Carassius auratus (Goldfish) protein is Progonadoliberin-3 (gnrh3).